A 285-amino-acid chain; its full sequence is Undecaprenyl-diphosphatase (285 aa).

The next 7 membrane-spanning stretches (helical) occupy residues 40–60 (DELLINAASNAGTLLAMLLYF), 92–112 (LCILVATPFALAGAVIYENFI), 122–142 (SVYAVAASTIVFGALLWWADA), 159–179 (FLIGASQLVAVIIPGTSRSGI), 197–217 (FSMLIGAPILAAVSLYGLLGL), 233–253 (LIVAALAFVSGYASIGLLMAL), and 259–279 (FLPFVLYRFALGIALLATSPI).

Belongs to the UppP family.

The protein localises to the cell inner membrane. The catalysed reaction is di-trans,octa-cis-undecaprenyl diphosphate + H2O = di-trans,octa-cis-undecaprenyl phosphate + phosphate + H(+). Functionally, catalyzes the dephosphorylation of undecaprenyl diphosphate (UPP). Confers resistance to bacitracin. The protein is Undecaprenyl-diphosphatase of Hyphomonas neptunium (strain ATCC 15444).